The primary structure comprises 385 residues: uncharacterized protein (385 aa).

This sequence belongs to the phage portal family. HK97 subfamily.

This is an uncharacterized protein from Rickettsia bellii (strain RML369-C).